Consider the following 260-residue polypeptide: MGILKGKKILITGILNEKSIAFGIAKSMYKQEAELIFVCQNKKIINKIKYLIKSINYNTIFFCDVSHDENIKELFFNIKKVWNNFDGLVHSIAYCPKKQMHEDFVESSSRKSFNICHEISSYSFLSMARECKNMLNKFSSLVTLSYLGSQKIVSNYNMMGLAKSSLEANVRYMANSLGKNNIRVNAISSGPIKTTSSYQIKNFNKIQKIHKLFSLTKNHVSSEEIGNVAAFLCSDLSIGITGSIINVDHGFNLNGINSII.

NAD(+)-binding positions include glycine 13, 19–20 (SI), glutamine 40, 64–65 (DV), and isoleucine 92. Active-site proton acceptor residues include tyrosine 146 and tyrosine 156. NAD(+) contacts are provided by residues lysine 163 and 192-196 (IKTTS).

The protein belongs to the short-chain dehydrogenases/reductases (SDR) family. FabI subfamily. In terms of assembly, homotetramer.

The catalysed reaction is a 2,3-saturated acyl-[ACP] + NAD(+) = a (2E)-enoyl-[ACP] + NADH + H(+). It functions in the pathway lipid metabolism; fatty acid biosynthesis. It participates in cofactor biosynthesis; biotin biosynthesis. In terms of biological role, catalyzes the reduction of a carbon-carbon double bond in an enoyl moiety that is covalently linked to an acyl carrier protein (ACP). Involved in the elongation cycle of fatty acid which are used in the lipid metabolism and in the biotin biosynthesis. The chain is Enoyl-[acyl-carrier-protein] reductase [NADH] FabI (fabI) from Buchnera aphidicola subsp. Schizaphis graminum (strain Sg).